A 372-amino-acid chain; its full sequence is Prostaglandin E synthase 2 (372 aa).

At 1 to 54 the chain is on the lumenal side; sequence MAHAVRALWPHGRALAWRLGDRPALGLHAQSRAGFTGAAGGSGPAATARKGGPR. Residues 55–71 form a helical membrane-spanning segment; it reads LLGAAALALGGALGLYH. The Cytoplasmic portion of the chain corresponds to 72–372; it reads TARWHLRAQD…VEKAIAEAPQ (301 aa). The 104-residue stretch at 87–190 folds into the Glutaredoxin domain; the sequence is SATQLSLSSR…DIITYYPPMK (104 aa). Position 92 is a phosphoserine (Ser-92). Residues Val-145 and 161 to 162 each bind glutathione; that span reads DS. The region spanning 259–372 is the GST C-terminal domain; it reads DYIVKEGNFG…VEKAIAEAPQ (114 aa).

Belongs to the GST superfamily. In terms of assembly, may interact with CEBPB. Interacts with EXOSC10. Homodimer. Synthesized as a Golgi membrane-associated protein, and the proteolytic removal of the N-terminal hydrophobic domain leads to the formation of a mature cytosolic enzyme. In terms of tissue distribution, detected in heart (at protein level). Widely expressed. Expressed in heart &gt; kidney &gt; muscle &gt; testis &gt; endometrium = ovary &gt; myometrium = spleen = lung. In endometrium, it is mainly expressed in luminal epithelial cells followed by glandular epithelial cells, but expression is also present in stromal cells at a lower level.

It localises to the microsome membrane. The protein resides in the cytoplasm. It carries out the reaction prostaglandin H2 = prostaglandin E2. The enzyme catalyses prostaglandin H2 = (12S)-hydroxy-(5Z,8E,10E)-heptadecatrienoate + malonaldehyde. It functions in the pathway lipid metabolism; prostaglandin biosynthesis. Its activity is regulated as follows. Isomerase activity is increased by sulfhydril compounds. Dithiothreitol (DTT) is most effective, followed by glutathione (GSH) and 2-mercaptoethanol. Its function is as follows. Isomerase that catalyzes the conversion of PGH2 into the more stable prostaglandin E2 (PGE2) (in vitro). The biological function and the GSH-dependent property of PTGES2 is still under debate. In vivo, PTGES2 could form a complex with GSH and heme and would not participate in PGE2 synthesis but would catalyze the degradation of prostaglandin E2 H2 (PGH2) to 12(S)-hydroxy-5(Z),8(E),10(E)-heptadecatrienoic acid (HHT) and malondialdehyde (MDA). The protein is Prostaglandin E synthase 2 (PTGES2) of Bos taurus (Bovine).